A 427-amino-acid polypeptide reads, in one-letter code: GTPase Obg (427 aa).

Residues 1-158 (MFVDIAKIYV…LWVILELKVL (158 aa)) form the Obg domain. One can recognise an OBG-type G domain in the interval 159-330 (ADVGLIGYPN…VLKRAYELLK (172 aa)). GTP-binding positions include 165 to 172 (GYPNVGKS), 190 to 194 (FTTKY), 212 to 215 (DIPG), 282 to 285 (NKMD), and 311 to 313 (SAA). Residues serine 172 and threonine 192 each contribute to the Mg(2+) site. In terms of domain architecture, OCT spans 347 to 427 (FVYYKKKDVK…ILDVEFEYYE (81 aa)).

This sequence belongs to the TRAFAC class OBG-HflX-like GTPase superfamily. OBG GTPase family. Monomer. Mg(2+) is required as a cofactor.

The protein resides in the cytoplasm. Its function is as follows. An essential GTPase which binds GTP, GDP and possibly (p)ppGpp with moderate affinity, with high nucleotide exchange rates and a fairly low GTP hydrolysis rate. Plays a role in control of the cell cycle, stress response, ribosome biogenesis and in those bacteria that undergo differentiation, in morphogenesis control. The protein is GTPase Obg of Caldicellulosiruptor saccharolyticus (strain ATCC 43494 / DSM 8903 / Tp8T 6331).